We begin with the raw amino-acid sequence, 115 residues long: Large ribosomal subunit protein bL19 (115 aa).

The protein belongs to the bacterial ribosomal protein bL19 family.

Functionally, this protein is located at the 30S-50S ribosomal subunit interface and may play a role in the structure and function of the aminoacyl-tRNA binding site. This Streptococcus pneumoniae serotype 2 (strain D39 / NCTC 7466) protein is Large ribosomal subunit protein bL19.